A 156-amino-acid chain; its full sequence is Protein Smg homolog (156 aa).

This sequence belongs to the Smg family.

This is Protein Smg homolog from Halorhodospira halophila (strain DSM 244 / SL1) (Ectothiorhodospira halophila (strain DSM 244 / SL1)).